Reading from the N-terminus, the 412-residue chain is Shaggy-related protein kinase zeta (412 aa).

Residues 1–19 show a composition bias toward pro residues; sequence MTSIPLGPPQPPSLAPQPP. Residues 1 to 33 form a disordered region; that stretch reads MTSIPLGPPQPPSLAPQPPHLHGGDSLKRRPDI. Over residues 22–33 the composition is skewed to basic and acidic residues; that stretch reads HGGDSLKRRPDI. A Phosphoserine modification is found at Ser-26. Residues 72–356 enclose the Protein kinase domain; that stretch reads YMAERVVGTG…ALEACAHPFF (285 aa). Residues 78–86 and Lys-101 contribute to the ATP site; that span reads VGTGSFGIV. Ser-127 carries the post-translational modification Phosphoserine. A phosphothreonine mark is found at Thr-136 and Thr-137. Asp-197 acts as the Proton acceptor in catalysis. At Ser-219 the chain carries Phosphoserine. Tyr-232 is subject to Phosphotyrosine. Ser-252 bears the Phosphoserine mark. Residue Thr-293 is modified to Phosphothreonine. Ser-342 is modified (phosphoserine). At Thr-346 the chain carries Phosphothreonine.

The protein belongs to the protein kinase superfamily. CMGC Ser/Thr protein kinase family. GSK-3 subfamily. As to quaternary structure, binds to KIB1. Interacts with beet curly top virus AL4/C4 and tomato golden mosaic virus AL4/AC4. In terms of processing, autophosphorylated mainly on threonine and serine residues.

The enzyme catalyses L-seryl-[protein] + ATP = O-phospho-L-seryl-[protein] + ADP + H(+). It carries out the reaction L-threonyl-[protein] + ATP = O-phospho-L-threonyl-[protein] + ADP + H(+). Its function is as follows. May mediate extracellular signals to regulate transcription in differentiating cells. The sequence is that of Shaggy-related protein kinase zeta (ASK6) from Arabidopsis thaliana (Mouse-ear cress).